The sequence spans 218 residues: Capsid protein (218 aa).

An N-acetylmethionine; by host modification is found at M1. Residues 1 to 31 (MDKSGSPNASRTSRRRRPRRGSRSASGADAG) are disordered. Basic residues predominate over residues 12–22 (TSRRRRPRRGS).

This sequence belongs to the cucumovirus capsid protein family.

The protein localises to the virion. Functionally, capsid protein. Probably binds RNA and plays a role in packaging. This chain is Capsid protein, found in Cucumber mosaic virus (strain Trk7) (CMV).